A 587-amino-acid polypeptide reads, in one-letter code: MAARDDAEARAAQREREVADLTTQVSFLQEELTALRRKLTESPRQARVLEERLHEVQANLAAVTGQNERLVATLKEARDQIVALKEEVDRLAQPPSGFGVFLESREDGTVEVFTGGRKLRVNVSPAVEVDSLKRGQEVMLNEALNVVEALGFEELGEIVMLKELLEDGRRALVISHADEERVVKLAESLVGQPIRAGDSLLLEPRSGYVYERIPKSEVEELVLEEVPDISYEEIGGLMRQIEQIRDAIELPYLHADLFREHKLRPPKGVLLYGPPGCGKTLIAKAVANSLAKQVAEKTGQSGKSFFLNIKGPELLNKYVGETERHIRLVFQRAREKASEGTPVIVFFDEMDSIFRTRGSGVSSDVENTIVPQLLSEIDGVEGLENVIVIGASNREDMIDPAILRPGRLDVKIKIERPDAEAAKDIFSKYLIEDLPLHPEDLAEHGGSRGGTISGMIQRVVERMYTESEENRFLEVTYANGDKEVLYFKDFNSGAMIQNIVDRSKKMAIKQFLESGQKGLRIQHLLAACVDEFSENEDLPNTTNPDDWARISGKKGERIVYIRTLVTGKQGTEAGRSIDTVANTGQYL.

The stretch at 1–94 (MAARDDAEAR…KEEVDRLAQP (94 aa)) forms a coiled coil. 276–281 (GCGKTL) lines the ATP pocket. The interval 586–587 (YL) is docks into pockets in the proteasome alpha-ring.

The protein belongs to the AAA ATPase family. As to quaternary structure, homohexamer. Assembles into a hexameric ring structure that caps the 20S proteasome core. Strongly interacts with the prokaryotic ubiquitin-like protein Pup through a hydrophobic interface; the interacting region of ARC lies in its N-terminal coiled-coil domain. There is one Pup binding site per ARC hexamer ring. Upon ATP-binding, the C-terminus of ARC interacts with the alpha-rings of the proteasome core, possibly by binding to the intersubunit pockets.

Its pathway is protein degradation; proteasomal Pup-dependent pathway. Its function is as follows. ATPase which is responsible for recognizing, binding, unfolding and translocation of pupylated proteins into the bacterial 20S proteasome core particle. May be essential for opening the gate of the 20S proteasome via an interaction with its C-terminus, thereby allowing substrate entry and access to the site of proteolysis. Thus, the C-termini of the proteasomal ATPase may function like a 'key in a lock' to induce gate opening and therefore regulate proteolysis. In Streptosporangium roseum (strain ATCC 12428 / DSM 43021 / JCM 3005 / KCTC 9067 / NCIMB 10171 / NRRL 2505 / NI 9100), this protein is Proteasome-associated ATPase.